Reading from the N-terminus, the 349-residue chain is Glycerol-3-phosphate dehydrogenase [NAD(+)], cytoplasmic (349 aa).

10 to 15 (GSGNWG) serves as a coordination point for NAD(+). Lysine 120 provides a ligand contact to substrate. Position 153 (alanine 153) interacts with NAD(+). Serine 154 is subject to Phosphoserine. The Proton acceptor role is filled by lysine 204. Arginine 269 contacts NAD(+). Position 269 to 270 (269 to 270 (RN)) interacts with substrate. At lysine 289 the chain carries N6-succinyllysine. Residues lysine 296 and glutamine 298 each coordinate NAD(+). At tyrosine 326 the chain carries Phosphotyrosine.

This sequence belongs to the NAD-dependent glycerol-3-phosphate dehydrogenase family. As to quaternary structure, homodimer.

It localises to the cytoplasm. It carries out the reaction sn-glycerol 3-phosphate + NAD(+) = dihydroxyacetone phosphate + NADH + H(+). In terms of biological role, has glycerol-3-phosphate dehydrogenase activity. This chain is Glycerol-3-phosphate dehydrogenase [NAD(+)], cytoplasmic (GPD1), found in Pongo abelii (Sumatran orangutan).